Consider the following 307-residue polypeptide: Acyl transferase (307 aa).

Residues Ser-116, Asp-213, and His-243 each act as charge relay system in the active site.

Belongs to the LuxD family.

The protein operates within lipid metabolism; fatty acid reduction for biolumincescence. Functionally, acyl transferase is part of the fatty acid reductase system required for aldehyde biosynthesis; it produces fatty acids for the luminescent reaction. This is Acyl transferase from Photorhabdus laumondii subsp. laumondii (strain DSM 15139 / CIP 105565 / TT01) (Photorhabdus luminescens subsp. laumondii).